The following is a 1710-amino-acid chain: Protein NETWORKED 1B (1710 aa).

One can recognise an NAB domain in the interval 13–92 (YSWWWDSHIP…ERYDHTTVEL (80 aa)). The tract at residues 113–159 (EDSASSSSEPRTEADTEALQKDGTKSKRSFSQMNKLDGTSDSHEADS) is disordered. Basic and acidic residues-rich tracts occupy residues 122-137 (PRTE…DGTK) and 150-159 (GTSDSHEADS). 6 coiled-coil regions span residues 152 to 446 (SDSH…ELGA), 474 to 546 (QMLR…EIHC), 579 to 883 (VKKL…IDSL), 974 to 1021 (HQCG…FESL), 1095 to 1259 (VSSL…LQEK), and 1285 to 1336 (LILE…LSAY). Residues 1409-1448 (RLSRQITRSTSQKRRDRRKIENIQPDDQVTGESRQPRLRP) are disordered. A coiled-coil region spans residues 1559–1665 (RRLSSLRISL…VLKLEDGTKS (107 aa)).

Belongs to the NET family. As to expression, expressed in root meristems and at very low levels throughout mature vasculature.

In terms of biological role, plant-specific actin binding protein. May be part of a membrane-cytoskeletal adapter complex. This Arabidopsis thaliana (Mouse-ear cress) protein is Protein NETWORKED 1B.